The chain runs to 272 residues: Large ribosomal subunit protein uL2 (272 aa).

Residues 222–272 form a disordered region; the sequence is GTAMNPVDHPHGGGEGRNFGKHPVSPWGKKTKGKKTRNNRLTDKFIVHRRS. Positions 250–259 are enriched in basic residues; sequence KKTKGKKTRN. Residues 261–272 show a composition bias toward basic and acidic residues; that stretch reads RLTDKFIVHRRS.

This sequence belongs to the universal ribosomal protein uL2 family. As to quaternary structure, part of the 50S ribosomal subunit. Forms a bridge to the 30S subunit in the 70S ribosome.

Its function is as follows. One of the primary rRNA binding proteins. Required for association of the 30S and 50S subunits to form the 70S ribosome, for tRNA binding and peptide bond formation. It has been suggested to have peptidyltransferase activity; this is somewhat controversial. Makes several contacts with the 16S rRNA in the 70S ribosome. This chain is Large ribosomal subunit protein uL2, found in Baumannia cicadellinicola subsp. Homalodisca coagulata.